Reading from the N-terminus, the 399-residue chain is S-adenosylmethionine synthase (399 aa).

Residue His17 participates in ATP binding. A Mg(2+)-binding site is contributed by Asp19. K(+) is bound at residue Glu45. Residues Glu58 and Gln101 each contribute to the L-methionine site. The flexible loop stretch occupies residues 101–111 (QSPDIAQGVDK). ATP contacts are provided by residues 176-178 (DGK), 243-244 (RF), Asp252, 258-259 (RK), and Lys279. Asp252 is an L-methionine binding site. Residue Lys283 coordinates L-methionine.

It belongs to the AdoMet synthase family. Homotetramer; dimer of dimers. Requires Mg(2+) as cofactor. The cofactor is K(+).

It is found in the cytoplasm. It carries out the reaction L-methionine + ATP + H2O = S-adenosyl-L-methionine + phosphate + diphosphate. It participates in amino-acid biosynthesis; S-adenosyl-L-methionine biosynthesis; S-adenosyl-L-methionine from L-methionine: step 1/1. Functionally, catalyzes the formation of S-adenosylmethionine (AdoMet) from methionine and ATP. The overall synthetic reaction is composed of two sequential steps, AdoMet formation and the subsequent tripolyphosphate hydrolysis which occurs prior to release of AdoMet from the enzyme. In Staphylococcus epidermidis (strain ATCC 35984 / DSM 28319 / BCRC 17069 / CCUG 31568 / BM 3577 / RP62A), this protein is S-adenosylmethionine synthase.